A 179-amino-acid polypeptide reads, in one-letter code: MSRLQDFYKSKVAPDLQAKFGYKSTMEVPRITKVTLNMGVSEAVADKKVIEHAVSDLTKIAGQKPVVTKTRKAIAGFKIRENYPIGCMVTLRGQRMYEFLDRLVAVALPRVRDFRGISGRAFDGRGNYNIGVKEQIIFPEIEYDKIDALRGLNISITTTAKTDDEAKALLTAFSFPFRN.

The protein belongs to the universal ribosomal protein uL5 family. Part of the 50S ribosomal subunit; part of the 5S rRNA/L5/L18/L25 subcomplex. Contacts the 5S rRNA and the P site tRNA. Forms a bridge to the 30S subunit in the 70S ribosome.

Functionally, this is one of the proteins that bind and probably mediate the attachment of the 5S RNA into the large ribosomal subunit, where it forms part of the central protuberance. In the 70S ribosome it contacts protein S13 of the 30S subunit (bridge B1b), connecting the 2 subunits; this bridge is implicated in subunit movement. Contacts the P site tRNA; the 5S rRNA and some of its associated proteins might help stabilize positioning of ribosome-bound tRNAs. In Bordetella petrii (strain ATCC BAA-461 / DSM 12804 / CCUG 43448), this protein is Large ribosomal subunit protein uL5.